The primary structure comprises 769 residues: Protein lethal(2)denticleless (769 aa).

6 WD repeats span residues 99-129, 143-174, 194-249, 264-303, 320-349, and 362-393; these read CHFN…RLWE, GHTR…LIWD, GHTG…KVWD, RHKL…YCYN, NSTF…YIWN, and GHTV…KIWR. The tract at residues 196–221 is disordered; sequence TGGPGTPVSQRKQRTRTPKMAGGTTS. A Phosphothreonine modification is found at Thr-201. Phosphoserine is present on Ser-204. Disordered stretches follow at residues 448–467, 476–562, and 655–769; these read RLMD…TTKR, AGQE…HVYT, and SPRL…VGSD. Thr-456 is modified (phosphothreonine). Ser-459 is modified (phosphoserine). Over residues 503–518 the composition is skewed to polar residues; it reads PSSQETACRHIQLQSI. Residue Ser-524 is modified to Phosphoserine. Residues 524–533 are compositionally biased toward basic and acidic residues; that stretch reads SPSKRQKENS. The span at 546–562 shows a compositional bias: polar residues; that stretch reads STPSHSPLSENVNHVYT. Position 655 is a phosphoserine (Ser-655). Residues 657–666 are compositionally biased toward polar residues; it reads RLQSLRQSEC. 3 positions are modified to phosphoserine: Ser-679, Ser-691, and Ser-711. The segment covering 689 to 704 has biased composition (low complexity); that stretch reads AGSSSHSHSQSQPKTP. Polar residues predominate over residues 705–714; that stretch reads TSSRRNSETT. Positions 728 to 743 are enriched in low complexity; sequence PAEETTTTNAAPSSSD. The segment covering 758–769 has biased composition (polar residues); that stretch reads SMRTPTTAVGSD.

This sequence belongs to the WD repeat cdt2 family. In terms of assembly, component of the DCX(DTL) E3 ubiquitin ligase complex, at least composed of Cul-4, pic/DDB1, l(2)dtl/CDT2 and Roc1a. As to expression, ubiquitously expressed during embryogenesis with no sign of tissue specificity in expression up to stage 17.

It is found in the cytoplasm. It functions in the pathway protein modification; protein ubiquitination. In terms of biological role, substrate-specific adapter of a DCX (DDB1-CUL4-X-box) E3 ubiquitin-protein ligase complex required for cell cycle control. The DCX(DTL) complex, also named CRL4(CDT2) complex, mediates the polyubiquitination and subsequent degradation of E2f during S phase. E2f degradation is necessary to ensure proper development. Substrates require their interaction with PCNA for their polyubiquitination: substrates interact with PCNA via their PIP-box, leading to recruit the DCX(DTL) complex. In Drosophila melanogaster (Fruit fly), this protein is Protein lethal(2)denticleless (l(2)dtl).